The sequence spans 96 residues: uncharacterized protein (96 aa).

An N-terminal signal peptide occupies residues 1–19 (MKQIIPALITLSFSPMAIA).

This is an uncharacterized protein from Synechocystis sp. (strain ATCC 27184 / PCC 6803 / Kazusa).